A 706-amino-acid polypeptide reads, in one-letter code: Polyribonucleotide nucleotidyltransferase (706 aa).

Positions 490 and 496 each coordinate Mg(2+). The region spanning 556-615 is the KH domain; that stretch reads PRIETMQIPTDKIREVIGSGGKVIREIVEVSGAKVDINDEGIIKIASPNGDSIQKAYDMI. Residues 625–693 form the S1 motif domain; it reads GKIYKGKVVK…DRGKVRLAMK (69 aa).

This sequence belongs to the polyribonucleotide nucleotidyltransferase family. Requires Mg(2+) as cofactor.

It is found in the cytoplasm. It carries out the reaction RNA(n+1) + phosphate = RNA(n) + a ribonucleoside 5'-diphosphate. Involved in mRNA degradation. Catalyzes the phosphorolysis of single-stranded polyribonucleotides processively in the 3'- to 5'-direction. This is Polyribonucleotide nucleotidyltransferase from Jannaschia sp. (strain CCS1).